A 188-amino-acid chain; its full sequence is Probable nicotinate-nucleotide adenylyltransferase (188 aa).

This sequence belongs to the NadD family.

The enzyme catalyses nicotinate beta-D-ribonucleotide + ATP + H(+) = deamido-NAD(+) + diphosphate. It participates in cofactor biosynthesis; NAD(+) biosynthesis; deamido-NAD(+) from nicotinate D-ribonucleotide: step 1/1. Catalyzes the reversible adenylation of nicotinate mononucleotide (NaMN) to nicotinic acid adenine dinucleotide (NaAD). The sequence is that of Probable nicotinate-nucleotide adenylyltransferase from Salinispora tropica (strain ATCC BAA-916 / DSM 44818 / JCM 13857 / NBRC 105044 / CNB-440).